The primary structure comprises 124 residues: U33-theraphotoxin-Cg1a (124 aa).

Residues 1–17 form the signal peptide; sequence MKFAVAIAFTLLVCVFA. Disulfide bonds link cysteine 26–cysteine 37, cysteine 31–cysteine 51, cysteine 36–cysteine 75, cysteine 61–cysteine 83, and cysteine 77–cysteine 94. Basic and acidic residues predominate over residues 93 to 108; that stretch reads RCQEESGKSDKSKESQ. A disordered region spans residues 93–124; the sequence is RCQEESGKSDKSKESQGSDESEESEESKESCG. Positions 109 to 118 are enriched in acidic residues; that stretch reads GSDESEESEE.

It belongs to the neurotoxin 32 family. Expressed by the venom gland.

The protein resides in the secreted. In Chilobrachys guangxiensis (Chinese earth tiger tarantula), this protein is U33-theraphotoxin-Cg1a.